A 93-amino-acid chain; its full sequence is MPRSLKKGPFVDDHLLKKVDVQNEKNTKQVIKTWSRRSTIIPDFIGHTFAVHDGRKHVPVFVTEAMVGHKLGEFAPTRTFKGHIKDDRKSKRR.

This sequence belongs to the universal ribosomal protein uS19 family.

In terms of biological role, protein S19 forms a complex with S13 that binds strongly to the 16S ribosomal RNA. The sequence is that of Small ribosomal subunit protein uS19 from Mycolicibacterium smegmatis (strain ATCC 700084 / mc(2)155) (Mycobacterium smegmatis).